The following is an 85-amino-acid chain: uncharacterized protein (85 aa).

The next 2 helical transmembrane spans lie at F14 to I34 and I60 to L80.

It localises to the cell membrane. This is an uncharacterized protein from Escherichia coli O157:H7.